Here is a 317-residue protein sequence, read N- to C-terminus: Acetyl-coenzyme A carboxylase carboxyl transferase subunit alpha (317 aa).

The CoA carboxyltransferase C-terminal domain occupies 40 to 293 (LEKRSADALK…GDIIAASLRS (254 aa)).

The protein belongs to the AccA family. As to quaternary structure, acetyl-CoA carboxylase is a heterohexamer composed of biotin carboxyl carrier protein (AccB), biotin carboxylase (AccC) and two subunits each of ACCase subunit alpha (AccA) and ACCase subunit beta (AccD).

Its subcellular location is the cytoplasm. The enzyme catalyses N(6)-carboxybiotinyl-L-lysyl-[protein] + acetyl-CoA = N(6)-biotinyl-L-lysyl-[protein] + malonyl-CoA. The protein operates within lipid metabolism; malonyl-CoA biosynthesis; malonyl-CoA from acetyl-CoA: step 1/1. In terms of biological role, component of the acetyl coenzyme A carboxylase (ACC) complex. First, biotin carboxylase catalyzes the carboxylation of biotin on its carrier protein (BCCP) and then the CO(2) group is transferred by the carboxyltransferase to acetyl-CoA to form malonyl-CoA. The sequence is that of Acetyl-coenzyme A carboxylase carboxyl transferase subunit alpha from Brucella melitensis biotype 2 (strain ATCC 23457).